Here is a 129-residue protein sequence, read N- to C-terminus: Small ribosomal subunit protein uS11 (129 aa).

Belongs to the universal ribosomal protein uS11 family. Part of the 30S ribosomal subunit. Interacts with proteins S7 and S18. Binds to IF-3.

Located on the platform of the 30S subunit, it bridges several disparate RNA helices of the 16S rRNA. Forms part of the Shine-Dalgarno cleft in the 70S ribosome. The chain is Small ribosomal subunit protein uS11 from Pseudomonas entomophila (strain L48).